A 271-amino-acid chain; its full sequence is Ferric enterobactin transport ATP-binding protein FepC (271 aa).

An ABC transporter domain is found at 8 to 244 (LRGEQLTLGY…ELIERIYGLR (237 aa)). 40 to 47 (GPNGCGKS) contributes to the ATP binding site.

It belongs to the ABC transporter superfamily. As to quaternary structure, the complex is composed of two ATP-binding proteins (FepC), two transmembrane proteins (FepD and FepG) and a solute-binding protein (FepB).

It is found in the cell inner membrane. The catalysed reaction is Fe(III)-enterobactin(out) + ATP + H2O = Fe(III)-enterobactin(in) + ADP + phosphate + H(+). Its function is as follows. Part of the ABC transporter complex FepBDGC involved in ferric enterobactin uptake. Responsible for energy coupling to the transport system. This chain is Ferric enterobactin transport ATP-binding protein FepC (fepC), found in Escherichia coli (strain K12).